We begin with the raw amino-acid sequence, 267 residues long: Carboxy-S-adenosyl-L-methionine synthase (267 aa).

Positions 1 to 11 (MPNRDTQSQND) are enriched in polar residues. Residues 1–25 (MPNRDTQSQNDTPRHSPEAAEPQRD) form a disordered region. Residues 12–24 (TPRHSPEAAEPQR) are compositionally biased toward basic and acidic residues. S-adenosyl-L-methionine-binding positions include tyrosine 59, 84–86 (GCS), 109–110 (DN), 137–138 (DI), asparagine 152, and arginine 219.

The protein belongs to the class I-like SAM-binding methyltransferase superfamily. Cx-SAM synthase family. Homodimer.

It catalyses the reaction prephenate + S-adenosyl-L-methionine = carboxy-S-adenosyl-L-methionine + 3-phenylpyruvate + H2O. Catalyzes the conversion of S-adenosyl-L-methionine (SAM) to carboxy-S-adenosyl-L-methionine (Cx-SAM). This chain is Carboxy-S-adenosyl-L-methionine synthase, found in Yersinia pseudotuberculosis serotype O:1b (strain IP 31758).